The chain runs to 354 residues: tRNA-specific 2-thiouridylase MnmA (354 aa).

Residues 6-13 and L33 each bind ATP; that span reads LLSGGVDS. C100 serves as the catalytic Nucleophile. Residues C100 and C195 are joined by a disulfide bond. Position 123 (G123) interacts with ATP. The interval 145-147 is interaction with tRNA; it reads KDQ. C195 serves as the catalytic Cysteine persulfide intermediate.

Belongs to the MnmA/TRMU family.

The protein resides in the cytoplasm. The catalysed reaction is S-sulfanyl-L-cysteinyl-[protein] + uridine(34) in tRNA + AH2 + ATP = 2-thiouridine(34) in tRNA + L-cysteinyl-[protein] + A + AMP + diphosphate + H(+). Catalyzes the 2-thiolation of uridine at the wobble position (U34) of tRNA, leading to the formation of s(2)U34. The protein is tRNA-specific 2-thiouridylase MnmA of Borrelia hermsii (strain HS1 / DAH).